The primary structure comprises 205 residues: uncharacterized protein (205 aa).

Residues 1–82 (MIKVYGVPGW…MVLDRRPDLA (82 aa)) enclose the GST N-terminal domain. Glutathione-binding positions include valine 53 and 66 to 67 (ET). In terms of domain architecture, GST C-terminal spans 86-205 (GRAERQLFQR…QEVLKRNEII (120 aa)).

The protein belongs to the GST superfamily. Beta family.

This is an uncharacterized protein from Escherichia coli (strain K12).